The chain runs to 131 residues: Small ribosomal subunit protein uS12 (131 aa).

Asp89 bears the 3-methylthioaspartic acid mark.

This sequence belongs to the universal ribosomal protein uS12 family. As to quaternary structure, part of the 30S ribosomal subunit. Contacts proteins S8 and S17. May interact with IF1 in the 30S initiation complex.

Functionally, with S4 and S5 plays an important role in translational accuracy. In terms of biological role, interacts with and stabilizes bases of the 16S rRNA that are involved in tRNA selection in the A site and with the mRNA backbone. Located at the interface of the 30S and 50S subunits, it traverses the body of the 30S subunit contacting proteins on the other side and probably holding the rRNA structure together. The combined cluster of proteins S8, S12 and S17 appears to hold together the shoulder and platform of the 30S subunit. This chain is Small ribosomal subunit protein uS12, found in Karelsulcia muelleri (strain GWSS) (Sulcia muelleri).